The primary structure comprises 771 residues: Hyperosmolality-gated Ca2+ permeable channel 1.2 (771 aa).

The Extracellular portion of the chain corresponds to 1–4 (MATL). Residues 5–27 (QDIGVSAGINILSAFVFFIIFAV) form a helical membrane-spanning segment. Over 28–100 (LRLQPFNDRV…AGLDSVVYLR (73 aa)) the chain is Cytoplasmic. Residues 101-125 (IYWLGLKIFTPIAVLAWAVLVPVNW) traverse the membrane as a helical segment. Topologically, residues 126 to 156 (TNNTLEMAKQLRNVTSSDIDKLSVSNIPEYS) are extracellular. Residues 157-178 (MRFWTHIVMAYAFTIWTCYVLM) form a helical membrane-spanning segment. Residues 179–374 (KEYETIANMR…AIPYVSLTVR (196 aa)) are Cytoplasmic-facing. Residues 375 to 401 (RLIMHVAFFFLTFFFIVPIAFVQSLAT) traverse the membrane as a helical segment. Over 402 to 419 (IEGIVKAAPFLKFIVDDK) the chain is Extracellular. A helical transmembrane segment spans residues 420 to 445 (FMKSVIQGFLPGIALKLFLAFLPSIL). The Cytoplasmic portion of the chain corresponds to 446–462 (MIMSKFEGFTSISSLER). Residues 463–485 (RAAFRYYIFNLVNVFLASVIAGA) form a helical membrane-spanning segment. The Extracellular segment spans residues 486–504 (AFEQLNSFLNQSANQIPKT). The chain crosses the membrane as a helical span at residues 505–533 (IGVAIPMKATFFITYIMVDGWAGVAGEIL). The Cytoplasmic segment spans residues 534–566 (MLKPLIMFHLKNAFLVKTDKDREEAMDPGSIGF). The chain crosses the membrane as a helical span at residues 567–588 (NTGEPRIQLYFLLGLVYAPVTP). Methionine 589 is a topological domain (extracellular). The chain crosses the membrane as a helical span at residues 590 to 605 (LLPFILVFFALAYIVY). The Cytoplasmic segment spans residues 606–625 (RHQIINVYNQEYESAAAFWP). Residues 626–648 (DVHGRVIAALVISQLLLMGLLGT) traverse the membrane as a helical segment. At 649–651 (KHA) the chain is on the extracellular side. The chain crosses the membrane as a helical span at residues 652–670 (ALAAPFLIALPVLTIGFHH). Over 671–771 (FCKGRYEPAF…PSLPFSGKLV (101 aa)) the chain is Cytoplasmic. The disordered stretch occupies residues 741-771 (PTKRQSRRNTPAPSIISGDDSPSLPFSGKLV).

The protein belongs to the CSC1 (TC 1.A.17) family. In terms of assembly, homodimer.

Its subcellular location is the membrane. Its activity is regulated as follows. Activated by hyperosmotic shock after mannitol or NaCl treatment. Activated by mechanical pressure: activated in response to membrane stretch and poke. Membrane lipids play a key role in mechanosensation by acting as a wall mainly formed by lipid head groups. Functionally, acts as an osmosensitive calcium-permeable cation channel. Specifically conducts cations including Ca(2+), K(+) and Na(+) in vitro. Inactivation or closure of the channel is calcium-dependent. Mechanosensitive ion channel that converts mechanical stimuli into a flow of ions: activated in response to membrane stretch and poke. This chain is Hyperosmolality-gated Ca2+ permeable channel 1.2, found in Arabidopsis thaliana (Mouse-ear cress).